The primary structure comprises 607 residues: Branchpoint-bridging protein (607 aa).

Composition is skewed to polar residues over residues 1–15 (MSWR…NNIP) and 35–45 (VTPSAPSSVTN). 2 disordered regions span residues 1 to 92 (MSWR…TENK) and 134 to 155 (VPAD…GRRV). Basic and acidic residues predominate over residues 46 to 76 (GDRDRDRDGPVYSNDRDVKRGRSPERSEDGP). The 81-residue stretch at 201–281 (YVPVNDYPEI…EKVNKAKKLI (81 aa)) folds into the KH domain. 2 consecutive CCHC-type zinc fingers follow at residues 319 to 336 (QACQ…DCPE) and 344 to 361 (IICR…DCPD). 2 disordered regions span residues 363–390 (QRGA…GGDA) and 407–607 (AAPA…PPGA). Gly residues predominate over residues 373–389 (PGAGRTAGRIGSSGGGD). Positions 472-500 (ARDRNERRHDDRDRGDSYYGGDRRHDDYG) are enriched in basic and acidic residues. Over residues 521 to 533 (SAPAIPTAPAYPG) the composition is skewed to low complexity. Over residues 534–545 (AYGGYPGYGAPP) the composition is skewed to gly residues. Pro residues-rich tracts occupy residues 550–563 (APPP…PGAP) and 581–607 (APPP…PPGA).

This sequence belongs to the BBP/SF1 family.

It localises to the nucleus. Its function is as follows. Necessary for the splicing of pre-mRNA. Has a role in the recognition of the branch site (5'-UACUAAC-3'), the pyrimidine tract and the 3'-splice site at the 3'-end of introns. The chain is Branchpoint-bridging protein (bbp-1) from Neurospora crassa (strain ATCC 24698 / 74-OR23-1A / CBS 708.71 / DSM 1257 / FGSC 987).